The primary structure comprises 259 residues: Ribosomal RNA large subunit methyltransferase E (259 aa).

Residues Gly-58, Trp-60, Asp-78, Asp-96, and Asp-120 each coordinate S-adenosyl-L-methionine. The active-site Proton acceptor is Lys-160.

This sequence belongs to the class I-like SAM-binding methyltransferase superfamily. RNA methyltransferase RlmE family.

It localises to the cytoplasm. The catalysed reaction is uridine(2552) in 23S rRNA + S-adenosyl-L-methionine = 2'-O-methyluridine(2552) in 23S rRNA + S-adenosyl-L-homocysteine + H(+). Specifically methylates the uridine in position 2552 of 23S rRNA at the 2'-O position of the ribose in the fully assembled 50S ribosomal subunit. This is Ribosomal RNA large subunit methyltransferase E from Methanococcus vannielii (strain ATCC 35089 / DSM 1224 / JCM 13029 / OCM 148 / SB).